A 42-amino-acid chain; its full sequence is Protein YmiD (42 aa).

The protein is Protein YmiD of Escherichia coli (strain K12).